We begin with the raw amino-acid sequence, 76 residues long: uORF2 protein (76 aa).

In terms of biological role, plays a role in viral replication. The polypeptide is uORF2 protein (Zika virus (isolate ZIKV/Human/French Polynesia/10087PF/2013) (ZIKV)).